Consider the following 37-residue polypeptide: Photosystem II reaction center protein M (37 aa).

Residues 7 to 27 (GFIAVLMFLAIPTAFLLIPYV) form a helical membrane-spanning segment.

The protein belongs to the PsbM family. In terms of assembly, PSII is composed of 1 copy each of membrane proteins PsbA, PsbB, PsbC, PsbD, PsbE, PsbF, PsbH, PsbI, PsbJ, PsbK, PsbL, PsbM, PsbT, PsbX, PsbY, PsbZ, Psb30/Ycf12, at least 3 peripheral proteins of the oxygen-evolving complex and a large number of cofactors. It forms dimeric complexes.

The protein resides in the plastid. It is found in the chloroplast thylakoid membrane. Its function is as follows. One of the components of the core complex of photosystem II (PSII). PSII is a light-driven water:plastoquinone oxidoreductase that uses light energy to abstract electrons from H(2)O, generating O(2) and a proton gradient subsequently used for ATP formation. It consists of a core antenna complex that captures photons, and an electron transfer chain that converts photonic excitation into a charge separation. This subunit is found at the monomer-monomer interface. In Pinus koraiensis (Korean pine), this protein is Photosystem II reaction center protein M.